Consider the following 886-residue polypeptide: Envelope glycoprotein GP350 (886 aa).

The Virion surface portion of the chain corresponds to 1-839 (MEAALLVCQY…TSQPRFSNLS (839 aa)). Asn-47, Asn-87, Asn-114, Asn-166, Asn-169, Asn-195, Asn-229, Asn-277, Asn-318, Asn-328, Asn-345, Asn-356, Asn-378, Asn-386, Asn-411, Asn-435, Asn-443, Asn-457, Asn-497, Asn-519, Asn-533, Asn-554, Asn-568, Asn-589, Asn-603, Asn-606, Asn-624, and Asn-635 each carry an N-linked (GlcNAc...) asparagine; by host glycan. The disordered stretch occupies residues 423 to 810 (KAPESTTTSP…PSTSSKLRPR (388 aa)). Residues 428-437 (TTTSPTLNTT) show a composition bias toward low complexity. Residues 442–488 (PNTTTGLPSSTHVPTNLTAPASTGPTVSTADVTSPTPAGTTSGASPV) are compositionally biased toward polar residues. Residues 507–595 (TSPTSAVTTP…PTPNATSPTV (89 aa)) are compositionally biased toward low complexity. Polar residues predominate over residues 596 to 637 (GETSPQANTTNHTLGGTSSTPVVTSPPKNATSAVTTGQHNIT). A compositionally biased stretch (low complexity) spans 638–660 (SSSTSSMSLRPSSISETLSPSTS). 2 N-linked (GlcNAc...) asparagine; by host glycosylation sites follow: Asn-662 and Asn-680. The segment covering 684–699 (VTPASTSTHHVSTSSP) has biased composition (low complexity). Residues 704-720 (GTTSQASGPGNSSTSTK) show a composition bias toward polar residues. 4 N-linked (GlcNAc...) asparagine; by host glycosylation sites follow: Asn-714, Asn-725, Asn-734, and Asn-759. Residues 733–760 (KNATSPQAPSGQKTAVPTVTSTGGKANS) show a composition bias toward polar residues. Over residues 761 to 771 (TTGGKHTTGHG) the composition is skewed to low complexity. Polar residues predominate over residues 773 to 806 (RTSTEPTTDYGGDSTTPRTRYNATTYLPPSTSSK). N-linked (GlcNAc...) asparagine; by host glycans are attached at residues Asn-794 and Asn-837. The helical transmembrane segment at 840–860 (MLVLQWASLAVLTLLLLLVMA) threads the bilayer. Over 861 to 886 (DCAFRRNLSTSHTYTTPPYDDAETYV) the chain is Intravirion.

This sequence belongs to the Epstein-Barr GP350 family. In terms of assembly, interacts with host CR2. Extensively glycosylated.

It localises to the virion membrane. Its subcellular location is the host membrane. Initiates virion attachment to host B-lymphocyte cell, leading to virus entry. Acts by binding to host CR2 at the surface of B-lymphocytes, facilitating the binding of viral glycoprotein gp42 to HLA class II molecules. Attachment triggers virion-host membrane fusion and invasion of the host cell. The chain is Envelope glycoprotein GP350 from Homo sapiens (Human).